Reading from the N-terminus, the 61-residue chain is Large ribosomal subunit protein uL30 (61 aa).

Belongs to the universal ribosomal protein uL30 family. As to quaternary structure, part of the 50S ribosomal subunit.

The protein is Large ribosomal subunit protein uL30 of Exiguobacterium sibiricum (strain DSM 17290 / CCUG 55495 / CIP 109462 / JCM 13490 / 255-15).